The chain runs to 236 residues: Ribosome maturation protein SDO1 homolog (236 aa).

It belongs to the SDO1/SBDS family.

In Pyrococcus abyssi (strain GE5 / Orsay), this protein is Ribosome maturation protein SDO1 homolog.